Reading from the N-terminus, the 96-residue chain is Phosphoribosyl-ATP pyrophosphatase (96 aa).

This sequence belongs to the PRA-PH family.

Its subcellular location is the cytoplasm. It carries out the reaction 1-(5-phospho-beta-D-ribosyl)-ATP + H2O = 1-(5-phospho-beta-D-ribosyl)-5'-AMP + diphosphate + H(+). It functions in the pathway amino-acid biosynthesis; L-histidine biosynthesis; L-histidine from 5-phospho-alpha-D-ribose 1-diphosphate: step 2/9. The chain is Phosphoribosyl-ATP pyrophosphatase from Methanococcus maripaludis (strain C6 / ATCC BAA-1332).